The sequence spans 293 residues: SAGA-associated factor 29 (293 aa).

The stretch at 12 to 88 (ELLAELQRLL…KALDKIAEIK (77 aa)) forms a coiled coil. Residues 152–293 (GDYVAKPGDK…VVACKETKKK (142 aa)) enclose the SGF29 C-terminal domain. Histone H3K4me3 N-terminus binding regions lie at residues 194–196 (DID) and 240–243 (QTTC). Residues 264-266 (FED) form a histone H3K4me3 binding region.

The protein belongs to the SGF29 family. As to quaternary structure, interacts with dimethylated and trimethylated 'Lys-4' of histone H3 (H3K4me2 and H3K4me3), with a preference for the trimethylated form (H3K4me3). Component of some SAGA-type complexes. Component of the ADA2A-containing complex (ATAC).

It localises to the nucleus. Its function is as follows. Chromatin reader component of some histone acetyltransferase (HAT) SAGA-type complexes like the TFTC-HAT, ATAC or STAGA complexes. SGF29 specifically recognizes and binds methylated 'Lys-4' of histone H3 (H3K4me), with a preference for trimethylated form (H3K4me3). In the SAGA-type complexes, SGF29 is required to recruit complexes to H3K4me. Also binds non-histone proteins that are methylated on Lys residues. The polypeptide is SAGA-associated factor 29 (Gallus gallus (Chicken)).